Consider the following 258-residue polypeptide: Deoxyribose-phosphate aldolase (258 aa).

Asp102 serves as the catalytic Proton donor/acceptor. The active-site Schiff-base intermediate with acetaldehyde is Lys165. The Proton donor/acceptor role is filled by Lys199.

It belongs to the DeoC/FbaB aldolase family. DeoC type 2 subfamily.

It localises to the cytoplasm. The catalysed reaction is 2-deoxy-D-ribose 5-phosphate = D-glyceraldehyde 3-phosphate + acetaldehyde. It participates in carbohydrate degradation; 2-deoxy-D-ribose 1-phosphate degradation; D-glyceraldehyde 3-phosphate and acetaldehyde from 2-deoxy-alpha-D-ribose 1-phosphate: step 2/2. Its function is as follows. Catalyzes a reversible aldol reaction between acetaldehyde and D-glyceraldehyde 3-phosphate to generate 2-deoxy-D-ribose 5-phosphate. The polypeptide is Deoxyribose-phosphate aldolase (Vibrio vulnificus (strain CMCP6)).